A 440-amino-acid chain; its full sequence is UDP-N-acetylmuramoylalanine--D-glutamate ligase (440 aa).

112–118 (GSNGKST) lines the ATP pocket.

The protein belongs to the MurCDEF family.

The protein localises to the cytoplasm. The catalysed reaction is UDP-N-acetyl-alpha-D-muramoyl-L-alanine + D-glutamate + ATP = UDP-N-acetyl-alpha-D-muramoyl-L-alanyl-D-glutamate + ADP + phosphate + H(+). It participates in cell wall biogenesis; peptidoglycan biosynthesis. Its function is as follows. Cell wall formation. Catalyzes the addition of glutamate to the nucleotide precursor UDP-N-acetylmuramoyl-L-alanine (UMA). This chain is UDP-N-acetylmuramoylalanine--D-glutamate ligase, found in Blochmanniella pennsylvanica (strain BPEN).